The primary structure comprises 322 residues: Probable uridine nucleosidase 2 (322 aa).

Catalysis depends on residues D14 and H246.

The protein belongs to the IUNH family. In terms of assembly, component of the NSH heterocomplex made of URH1/NSH1 and URH2/NSH2 which exhibits strong xanthosine nucleosidase activity. Interacts with URH1. Expressed in roots, seedlings and flowers.

The protein resides in the cytoplasm. The protein localises to the cytosol. It carries out the reaction uridine + H2O = D-ribose + uracil. The enzyme catalyses inosine + H2O = hypoxanthine + D-ribose. The catalysed reaction is xanthosine + H2O = D-ribose + xanthine. Involved in pyrimidine breakdown, especially in response to dark stress. In the presence of URH1, exhibits efficient inosine and xanthosine hydrolytic activities. Support inosine breakdown especially during the late phase of senescence. The protein is Probable uridine nucleosidase 2 of Arabidopsis thaliana (Mouse-ear cress).